The sequence spans 248 residues: Clathrin light chain A (248 aa).

The interval 1–92 (MAELDPFGAP…YYQESNGPTD (92 aa)) is disordered. A compositionally biased stretch (gly residues) spans 13-25 (APGGPALGNGVAG). Over residues 61-71 (GPQPHGEPPGG) the composition is skewed to pro residues. An involved in binding clathrin heavy chain region spans residues 100 to 162 (VDRLQSEPES…QLQKTKANNR (63 aa)). A phosphoserine mark is found at S105 and S206. Position 223 is an N6-acetyllysine (K223). Phosphoserine is present on S236. An N6-acetyllysine modification is found at K242.

This sequence belongs to the clathrin light chain family. In terms of assembly, clathrin coats are formed from molecules containing 3 heavy chains and 3 light chains. Interacts with CALY; the interaction stimulates clathrin self-assembly and clathrin-mediated endocytosis. Interacts with CKAP5 and TACC3 forming the TACC3/ch-TOG/clathrin complex located at spindle inter-microtubules bridges; the complex implicates clathrin triskelions.

The protein localises to the cytoplasmic vesicle membrane. The protein resides in the membrane. It localises to the coated pit. It is found in the cytoplasm. Its subcellular location is the cytoskeleton. The protein localises to the spindle. In terms of biological role, clathrin is the major protein of the polyhedral coat of coated pits and vesicles. Acts as a component of the TACC3/ch-TOG/clathrin complex proposed to contribute to stabilization of kinetochore fibers of the mitotic spindle by acting as inter-microtubule bridge. The protein is Clathrin light chain A (CLTA) of Homo sapiens (Human).